The sequence spans 146 residues: Large ribosomal subunit protein bL21 (146 aa).

Residues 95-104 (PKKKTRRKMG) show a composition bias toward basic residues. The tract at residues 95 to 146 (PKKKTRRKMGHRQELTRVMVKSISISKSTPKSSPKTEATKKSTSSKASKPEN) is disordered. The span at 115–146 (KSISISKSTPKSSPKTEATKKSTSSKASKPEN) shows a compositional bias: low complexity.

This sequence belongs to the bacterial ribosomal protein bL21 family. In terms of assembly, part of the 50S ribosomal subunit. Contacts protein L20.

Its function is as follows. This protein binds to 23S rRNA in the presence of protein L20. In Prochlorococcus marinus (strain MIT 9515), this protein is Large ribosomal subunit protein bL21.